Consider the following 151-residue polypeptide: uncharacterized protein (151 aa).

Positions 48–151 (RPPGWQPPVN…SKFDHTRKKF (104 aa)) are disordered. The segment covering 55-77 (PVNTGPTSPVSINASNAAPSNLK) has biased composition (polar residues). Low complexity-rich tracts occupy residues 85 to 105 (PRRLSSSTSSASSPPLRRLPS) and 123 to 141 (KSPSTTKPLSSTPSGSLLR).

This is an uncharacterized protein from Schizosaccharomyces pombe (strain 972 / ATCC 24843) (Fission yeast).